Reading from the N-terminus, the 508-residue chain is Lysine--tRNA ligase (508 aa).

Residues E416 and E423 each coordinate Mg(2+).

This sequence belongs to the class-II aminoacyl-tRNA synthetase family. As to quaternary structure, homodimer. Mg(2+) serves as cofactor.

Its subcellular location is the cytoplasm. The catalysed reaction is tRNA(Lys) + L-lysine + ATP = L-lysyl-tRNA(Lys) + AMP + diphosphate. This Prochlorococcus marinus (strain MIT 9303) protein is Lysine--tRNA ligase.